Here is a 559-residue protein sequence, read N- to C-terminus: 2-isopropylmalate synthase (559 aa).

The region spanning 33–307 is the Pyruvate carboxyltransferase domain; it reads PIWCSSDLRD…NPDLDFSDID (275 aa). Mg(2+) contacts are provided by D42, H246, H248, and N282. Residues 439–559 form a regulatory domain region; the sequence is ANTPYALVSH…SLSQPEAKAA (121 aa).

The protein belongs to the alpha-IPM synthase/homocitrate synthase family. LeuA type 2 subfamily. In terms of assembly, homodimer. Mg(2+) is required as a cofactor.

It localises to the cytoplasm. It carries out the reaction 3-methyl-2-oxobutanoate + acetyl-CoA + H2O = (2S)-2-isopropylmalate + CoA + H(+). It participates in amino-acid biosynthesis; L-leucine biosynthesis; L-leucine from 3-methyl-2-oxobutanoate: step 1/4. Its function is as follows. Catalyzes the condensation of the acetyl group of acetyl-CoA with 3-methyl-2-oxobutanoate (2-ketoisovalerate) to form 3-carboxy-3-hydroxy-4-methylpentanoate (2-isopropylmalate). This is 2-isopropylmalate synthase from Pseudomonas fluorescens (strain Pf0-1).